The sequence spans 604 residues: Elongation factor 4 (604 aa).

Positions 4–186 constitute a tr-type G domain; the sequence is EFIRNFSIIA…AIVHLVPPPK (183 aa). Residues 16–21 and 133–136 contribute to the GTP site; these read DHGKST and NKID.

This sequence belongs to the TRAFAC class translation factor GTPase superfamily. Classic translation factor GTPase family. LepA subfamily.

It is found in the cell inner membrane. The enzyme catalyses GTP + H2O = GDP + phosphate + H(+). In terms of biological role, required for accurate and efficient protein synthesis under certain stress conditions. May act as a fidelity factor of the translation reaction, by catalyzing a one-codon backward translocation of tRNAs on improperly translocated ribosomes. Back-translocation proceeds from a post-translocation (POST) complex to a pre-translocation (PRE) complex, thus giving elongation factor G a second chance to translocate the tRNAs correctly. Binds to ribosomes in a GTP-dependent manner. The chain is Elongation factor 4 from Solibacter usitatus (strain Ellin6076).